The following is a 941-amino-acid chain: Probable lipoxygenase 8, chloroplastic (941 aa).

Disordered regions lie at residues 1 to 22 and 45 to 68; these read MLRP…SSSS and LIAG…VVRC. A chloroplast-targeting transit peptide spans 1 to 67; the sequence is MLRPQLNPSS…QQGRQRVVVR (67 aa). One can recognise a PLAT domain in the interval 100 to 236; it reads AVATIKVTVE…SIDEGTPGKR (137 aa). Residues 242–941 enclose the Lipoxygenase domain; sequence AYLPGQTPAG…GMGIPNSTSI (700 aa). Disordered stretches follow at residues 255 to 274 and 288 to 331; these read YREE…READ and NPDS…RKGN. The span at 319–331 shows a compositional bias: basic and acidic residues; the sequence is SKKDPKSETRKGN. The Fe cation site is built by His598, His603, His790, Asn794, and Ile941.

It belongs to the lipoxygenase family. The cofactor is Fe cation.

Its subcellular location is the plastid. The protein resides in the chloroplast. The catalysed reaction is (9Z,12Z)-octadecadienoate + O2 = (13S)-hydroperoxy-(9Z,11E)-octadecadienoate. The enzyme catalyses (9Z,12Z,15Z)-octadecatrienoate + O2 = (13S)-hydroperoxy-(9Z,11E,15Z)-octadecatrienoate. The protein operates within lipid metabolism; oxylipin biosynthesis. Plant lipoxygenase may be involved in a number of diverse aspects of plant physiology including growth and development, pest resistance, and senescence or responses to wounding. It catalyzes the hydroperoxidation of lipids containing a cis,cis-1,4-pentadiene structure. The protein is Probable lipoxygenase 8, chloroplastic (CM-LOX2) of Oryza sativa subsp. japonica (Rice).